The sequence spans 159 residues: MKFRVVAVGKIKEKYLIRGIEEYQKRLRPYTGLEITEVKDSVLPNKLYQAEIEKVLIEEENRIKSKLSSRDYIIALDSEGSQFTSENFAQQIENLTLEGINQFTFIIGGTLGLSNSLKKEANMLLSFSKFTFPHQLMRLILTEQLYRAIKIIHNEPYHY.

The S-adenosyl-L-methionine site is built by Leu-76 and Gly-108.

Belongs to the RNA methyltransferase RlmH family. In terms of assembly, homodimer.

It is found in the cytoplasm. It carries out the reaction pseudouridine(1915) in 23S rRNA + S-adenosyl-L-methionine = N(3)-methylpseudouridine(1915) in 23S rRNA + S-adenosyl-L-homocysteine + H(+). In terms of biological role, specifically methylates the pseudouridine at position 1915 (m3Psi1915) in 23S rRNA. This chain is Ribosomal RNA large subunit methyltransferase H, found in Natranaerobius thermophilus (strain ATCC BAA-1301 / DSM 18059 / JW/NM-WN-LF).